Here is an 883-residue protein sequence, read N- to C-terminus: Integrator complex subunit 6 (883 aa).

Residues Ile-3–Val-227 form the VWFA domain. The Inhibitory loop signature appears at Met-625–Glu-632. Residues Arg-666–Thr-686 are disordered. Phosphoserine is present on Ser-800.

The protein belongs to the Integrator subunit 6 family. In terms of assembly, component of the Integrator complex, composed of core subunits INTS1, INTS2, INTS3, INTS4, INTS5, INTS6, INTS7, INTS8, INTS9/RC74, INTS10, INTS11/CPSF3L, INTS12, INTS13, INTS14 and INTS15. The core complex associates with protein phosphatase 2A subunits PPP2CA and PPP2R1A, to form the Integrator-PP2A (INTAC) complex.

Its subcellular location is the nucleus. The protein resides in the chromosome. Component of the integrator complex, a multiprotein complex that terminates RNA polymerase II (Pol II) transcription in the promoter-proximal region of genes. The integrator complex provides a quality checkpoint during transcription elongation by driving premature transcription termination of transcripts that are unfavorably configured for transcriptional elongation: the complex terminates transcription by (1) catalyzing dephosphorylation of the C-terminal domain (CTD) of Pol II subunit POLR2A/RPB1 and SUPT5H/SPT5, (2) degrading the exiting nascent RNA transcript via endonuclease activity and (3) promoting the release of Pol II from bound DNA. The integrator complex is also involved in terminating the synthesis of non-coding Pol II transcripts, such as enhancer RNAs (eRNAs), small nuclear RNAs (snRNAs), telomerase RNAs and long non-coding RNAs (lncRNAs). Within the integrator complex, INTS6 acts as a molecular adapter that promotes assembly of protein phosphatase 2A (PP2A) subunits to the integrator core complex, promoting recruitment of PP2A to transcription pause-release checkpoint. Mediates recruitment of cytoplasmic dynein to the nuclear envelope, probably as component of the integrator complex. The polypeptide is Integrator complex subunit 6 (Ints6) (Mus musculus (Mouse)).